A 265-amino-acid polypeptide reads, in one-letter code: Orotidine 5'-phosphate decarboxylase (265 aa).

Residues Asp37, 59–61, 91–100, Tyr217, and Arg236 contribute to the substrate site; these read KTH and DRKFADIGNT. Catalysis depends on Lys93, which acts as the Proton donor.

The protein belongs to the OMP decarboxylase family.

The catalysed reaction is orotidine 5'-phosphate + H(+) = UMP + CO2. It participates in pyrimidine metabolism; UMP biosynthesis via de novo pathway; UMP from orotate: step 2/2. The sequence is that of Orotidine 5'-phosphate decarboxylase (URA3) from Saccharomycopsis fibuligera (Yeast).